The primary structure comprises 385 residues: tRNA 2-selenouridine synthase (385 aa).

Residues 15–138 (FIADTPLIDV…ARQFLISTID (124 aa)) form the Rhodanese domain. The S-selanylcysteine intermediate role is filled by Cys98.

It belongs to the SelU family. In terms of assembly, monomer.

It catalyses the reaction 5-methylaminomethyl-2-thiouridine(34) in tRNA + selenophosphate + (2E)-geranyl diphosphate + H2O + H(+) = 5-methylaminomethyl-2-selenouridine(34) in tRNA + (2E)-thiogeraniol + phosphate + diphosphate. The catalysed reaction is 5-methylaminomethyl-2-thiouridine(34) in tRNA + (2E)-geranyl diphosphate = 5-methylaminomethyl-S-(2E)-geranyl-thiouridine(34) in tRNA + diphosphate. It carries out the reaction 5-methylaminomethyl-S-(2E)-geranyl-thiouridine(34) in tRNA + selenophosphate + H(+) = 5-methylaminomethyl-2-(Se-phospho)selenouridine(34) in tRNA + (2E)-thiogeraniol. The enzyme catalyses 5-methylaminomethyl-2-(Se-phospho)selenouridine(34) in tRNA + H2O = 5-methylaminomethyl-2-selenouridine(34) in tRNA + phosphate. Its function is as follows. Involved in the post-transcriptional modification of the uridine at the wobble position (U34) of tRNA(Lys), tRNA(Glu) and tRNA(Gln). Catalyzes the conversion of 2-thiouridine (S2U-RNA) to 2-selenouridine (Se2U-RNA). Acts in a two-step process involving geranylation of 2-thiouridine (S2U) to S-geranyl-2-thiouridine (geS2U) and subsequent selenation of the latter derivative to 2-selenouridine (Se2U) in the tRNA chain. The polypeptide is tRNA 2-selenouridine synthase (Nitrosomonas europaea (strain ATCC 19718 / CIP 103999 / KCTC 2705 / NBRC 14298)).